The following is a 213-amino-acid chain: Orotate phosphoribosyltransferase (213 aa).

K26 lines the 5-phospho-alpha-D-ribose 1-diphosphate pocket. 34–35 (FF) provides a ligand contact to orotate. 5-phospho-alpha-D-ribose 1-diphosphate contacts are provided by residues 72-73 (YK), R99, K100, K103, H105, and 124-132 (DDVITAGTA). 2 residues coordinate orotate: T128 and R156.

It belongs to the purine/pyrimidine phosphoribosyltransferase family. PyrE subfamily. Homodimer. Requires Mg(2+) as cofactor.

It carries out the reaction orotidine 5'-phosphate + diphosphate = orotate + 5-phospho-alpha-D-ribose 1-diphosphate. It functions in the pathway pyrimidine metabolism; UMP biosynthesis via de novo pathway; UMP from orotate: step 1/2. Its function is as follows. Catalyzes the transfer of a ribosyl phosphate group from 5-phosphoribose 1-diphosphate to orotate, leading to the formation of orotidine monophosphate (OMP). The polypeptide is Orotate phosphoribosyltransferase (Salmonella paratyphi A (strain ATCC 9150 / SARB42)).